The primary structure comprises 168 residues: NADH-quinone oxidoreductase subunit B (168 aa).

Positions 37, 38, 103, and 132 each coordinate [4Fe-4S] cluster.

Belongs to the complex I 20 kDa subunit family. NDH-1 is composed of 14 different subunits. Subunits NuoB, C, D, E, F, and G constitute the peripheral sector of the complex. Requires [4Fe-4S] cluster as cofactor.

It is found in the cell inner membrane. It carries out the reaction a quinone + NADH + 5 H(+)(in) = a quinol + NAD(+) + 4 H(+)(out). Its function is as follows. NDH-1 shuttles electrons from NADH, via FMN and iron-sulfur (Fe-S) centers, to quinones in the respiratory chain. The immediate electron acceptor for the enzyme in this species is believed to be ubiquinone. Couples the redox reaction to proton translocation (for every two electrons transferred, four hydrogen ions are translocated across the cytoplasmic membrane), and thus conserves the redox energy in a proton gradient. The polypeptide is NADH-quinone oxidoreductase subunit B (Campylobacter fetus subsp. fetus (strain 82-40)).